A 454-amino-acid chain; its full sequence is Signal recognition particle protein (454 aa).

Residues 102–109 (GLQGTGKT), 184–188 (DTAGR), and 242–245 (TKMD) contribute to the GTP site.

Belongs to the GTP-binding SRP family. SRP54 subfamily. Part of the signal recognition particle protein translocation system, which is composed of SRP and FtsY.

It is found in the cytoplasm. It catalyses the reaction GTP + H2O = GDP + phosphate + H(+). Functionally, involved in targeting and insertion of nascent membrane proteins into the cytoplasmic membrane. Binds to the hydrophobic signal sequence of the ribosome-nascent chain (RNC) as it emerges from the ribosomes. The SRP-RNC complex is then targeted to the cytoplasmic membrane where it interacts with the SRP receptor FtsY. In Aquifex aeolicus (strain VF5), this protein is Signal recognition particle protein.